The primary structure comprises 139 residues: MANSSSGLAVNDECKVKFRELKSRRTFRFIVFRIDDTDMEIKVDRLGEPNQGYGDFTDSLPANECRYAIYDLDFTTIENCQKSKIFFFSWSPDTARTRSKMLYASSKDRFRRELDGIQCEIQATDPSEMSLDIVRSRTN.

Residues 5-139 form the ADF-H domain; that stretch reads SSGLAVNDEC…SLDIVRSRTN (135 aa).

The protein belongs to the actin-binding proteins ADF family. Expressed in pollen.

In terms of biological role, actin-depolymerizing protein. Severs actin filaments (F-actin) and binds to actin monomers. This is Actin-depolymerizing factor 1 (ADF1) from Zea mays (Maize).